Consider the following 617-residue polypeptide: Putative type VI secretion system protein VgrGB (617 aa).

Residues 449–469 form a disordered region; sequence RTFHATNPSPYPLPASKTRTS.

Belongs to the VgrG protein family.

Functionally, a Vgr protein that is probably part of a type VI secretion system (T6SS). May be required for export of proteins involved in Rhs-mediated cellular contact-dependent growth inhibition (CDI). The polypeptide is Putative type VI secretion system protein VgrGB (vgrGB) (Dickeya dadantii (strain 3937) (Erwinia chrysanthemi (strain 3937))).